The sequence spans 818 residues: Phenylalanine--tRNA ligase beta subunit (818 aa).

The tRNA-binding domain occupies 39–148 (AAELQKFEVA…EDAVVGENFT (110 aa)). In terms of domain architecture, B5 spans 423 to 498 (SQKKPLDFSA…RIYGYDKIES (76 aa)). Asp476, Asp482, Glu485, and Glu486 together coordinate Mg(2+). An FDX-ACB domain is found at 724-817 (SDFQANFRDY…ISQKFQGTLR (94 aa)).

The protein belongs to the phenylalanyl-tRNA synthetase beta subunit family. Type 1 subfamily. Tetramer of two alpha and two beta subunits. Mg(2+) is required as a cofactor.

Its subcellular location is the cytoplasm. It catalyses the reaction tRNA(Phe) + L-phenylalanine + ATP = L-phenylalanyl-tRNA(Phe) + AMP + diphosphate + H(+). This is Phenylalanine--tRNA ligase beta subunit from Rickettsia conorii (strain ATCC VR-613 / Malish 7).